Here is a 92-residue protein sequence, read N- to C-terminus: MTTTQEKTRCTISGRVQGVCFRAATQEQAVRLGVTGYARNLRDGRVEVLACGPPEAVAQLREWLHEGPPAATVESVACEPADDPAPAEFSVG.

The region spanning 7–92 (KTRCTISGRV…DPAPAEFSVG (86 aa)) is the Acylphosphatase-like domain. Residues R22 and N40 contribute to the active site.

It belongs to the acylphosphatase family.

The enzyme catalyses an acyl phosphate + H2O = a carboxylate + phosphate + H(+). The sequence is that of Acylphosphatase (acyP) from Halorhodospira halophila (strain DSM 244 / SL1) (Ectothiorhodospira halophila (strain DSM 244 / SL1)).